A 295-amino-acid polypeptide reads, in one-letter code: Sulfotransferase 1 family member D1 (295 aa).

48 to 53 contributes to the 3'-phosphoadenylyl sulfate binding site; the sequence is KSGTTW. Substrate-binding positions include Phe-81 and 106 to 108; that span reads KTH. His-108 functions as the Proton acceptor in the catalytic mechanism. The 3'-phosphoadenylyl sulfate site is built by Arg-130 and Ser-138. Phe-142 serves as a coordination point for substrate. 3'-phosphoadenylyl sulfate-binding positions include Tyr-193, Ser-227, and 257 to 259; that span reads RKG.

Belongs to the sulfotransferase 1 family.

It is found in the cytoplasm. In terms of biological role, sulfotransferase with broad substrate specificity that utilizes 3'-phospho-5'-adenylyl sulfate (PAPS) as sulfonate donor to catalyze the sulfate conjugation of catecholamines, such as dopamine, prostaglandins, leukotriene E4, drugs and xenobiotic compounds. Has sulfotransferase activity towards p-nitrophenol, 2-naphthylamine and minoxidil (in vitro). Sulfonation increases the water solubility of most compounds, and therefore their renal excretion, but it can also result in bioactivation to form active metabolites. In Rattus norvegicus (Rat), this protein is Sulfotransferase 1 family member D1 (Sult1d1).